Here is a 100-residue protein sequence, read N- to C-terminus: Large ribosomal subunit protein uL23 (100 aa).

The protein belongs to the universal ribosomal protein uL23 family. As to quaternary structure, part of the 50S ribosomal subunit. Contacts protein L29, and trigger factor when it is bound to the ribosome.

Its function is as follows. One of the early assembly proteins it binds 23S rRNA. One of the proteins that surrounds the polypeptide exit tunnel on the outside of the ribosome. Forms the main docking site for trigger factor binding to the ribosome. The polypeptide is Large ribosomal subunit protein uL23 (Sodalis glossinidius (strain morsitans)).